The sequence spans 301 residues: Acetylglutamate kinase (301 aa).

Substrate-binding positions include 68 to 69 (GG), R90, and N195.

It belongs to the acetylglutamate kinase family. ArgB subfamily.

It localises to the cytoplasm. It catalyses the reaction N-acetyl-L-glutamate + ATP = N-acetyl-L-glutamyl 5-phosphate + ADP. It functions in the pathway amino-acid biosynthesis; L-arginine biosynthesis; N(2)-acetyl-L-ornithine from L-glutamate: step 2/4. Functionally, catalyzes the ATP-dependent phosphorylation of N-acetyl-L-glutamate. The protein is Acetylglutamate kinase of Pseudomonas aeruginosa (strain LESB58).